Here is a 355-residue protein sequence, read N- to C-terminus: UDP-N-acetylglucosamine--N-acetylmuramyl-(pentapeptide) pyrophosphoryl-undecaprenol N-acetylglucosamine transferase (355 aa).

Residues 11–13 (TGG), Asn-123, Arg-162, Ser-185, Ile-239, 258–263 (ALTVSE), and Gln-284 each bind UDP-N-acetyl-alpha-D-glucosamine.

This sequence belongs to the glycosyltransferase 28 family. MurG subfamily.

The protein resides in the cell inner membrane. It carries out the reaction di-trans,octa-cis-undecaprenyl diphospho-N-acetyl-alpha-D-muramoyl-L-alanyl-D-glutamyl-meso-2,6-diaminopimeloyl-D-alanyl-D-alanine + UDP-N-acetyl-alpha-D-glucosamine = di-trans,octa-cis-undecaprenyl diphospho-[N-acetyl-alpha-D-glucosaminyl-(1-&gt;4)]-N-acetyl-alpha-D-muramoyl-L-alanyl-D-glutamyl-meso-2,6-diaminopimeloyl-D-alanyl-D-alanine + UDP + H(+). The protein operates within cell wall biogenesis; peptidoglycan biosynthesis. In terms of biological role, cell wall formation. Catalyzes the transfer of a GlcNAc subunit on undecaprenyl-pyrophosphoryl-MurNAc-pentapeptide (lipid intermediate I) to form undecaprenyl-pyrophosphoryl-MurNAc-(pentapeptide)GlcNAc (lipid intermediate II). The sequence is that of UDP-N-acetylglucosamine--N-acetylmuramyl-(pentapeptide) pyrophosphoryl-undecaprenol N-acetylglucosamine transferase from Hydrogenovibrio crunogenus (strain DSM 25203 / XCL-2) (Thiomicrospira crunogena).